A 317-amino-acid polypeptide reads, in one-letter code: Putative toluene-4-sulfonate monooxygenase system reductase subunit TsaB2 (317 aa).

The FAD-binding FR-type domain occupies 4-106 (DVPVTVAAVR…SAPRNLFEMA (103 aa)). 110-220 (RRVLLLAGGI…PGSVRMERFK (111 aa)) contacts NAD(+). Positions 232–317 (FELVLQRAGL…CGGGRLVLDI (86 aa)) constitute a 2Fe-2S ferredoxin-type domain. Positions 266, 271, and 274 each coordinate [2Fe-2S] cluster.

As to quaternary structure, monomer. Part of the p-toluenesulfonate methyl-monooxygenase complex TsaBM, comprising the reductase TsaB and the oxygenase TsaM. The cofactor is FMN.

Functionally, involved in the toluene-4-sulfonate degradation pathway. This Comamonas testosteroni (Pseudomonas testosteroni) protein is Putative toluene-4-sulfonate monooxygenase system reductase subunit TsaB2 (tsaB2).